The following is a 501-amino-acid chain: Pentatricopeptide repeat-containing protein At4g16470 (501 aa).

8 PPR repeats span residues 107-141, 142-172, 173-207, 208-242, 243-273, 274-308, 309-344, and 345-379; these read EPET…GFAL, NEYL…LKIR, DLIP…RIVP, DQYT…CIKS, NIIV…LSTR, NVIT…GCRP, NPVT…GIEP, and EGQH…EHPP. A type E motif region spans residues 380–455; that stretch reads VWGSLLGACR…DPGYSQIELQ (76 aa). The interval 456–486 is type E(+) motif; sequence GEVHRFMKDDTSHRLSEKIYKKVHEMTSFFM.

This sequence belongs to the PPR family. PCMP-E subfamily.

The protein is Pentatricopeptide repeat-containing protein At4g16470 (PCMP-E12) of Arabidopsis thaliana (Mouse-ear cress).